The sequence spans 220 residues: Probable septum site-determining protein MinC (220 aa).

It belongs to the MinC family. Interacts with MinD and FtsZ.

Cell division inhibitor that blocks the formation of polar Z ring septums. Rapidly oscillates between the poles of the cell to destabilize FtsZ filaments that have formed before they mature into polar Z rings. Prevents FtsZ polymerization. This is Probable septum site-determining protein MinC from Vibrio parahaemolyticus serotype O3:K6 (strain RIMD 2210633).